A 634-amino-acid chain; its full sequence is Ankyrin repeat protein OPG025 (634 aa).

ANK repeat units follow at residues Asp36–Ile69, Asn70–Ser100, Asn103–Ser134, Met175–Tyr211, Ile307–Arg337, and His412–Ile441.

It belongs to the orthopoxvirus OPG025 family. In terms of assembly, interacts with components of host SCF complex CUL1 and SKP1 and components of the cullin deneddylation/COP9 signalosome complex subunits COPS7A and COPS7B.

In terms of biological role, plays a role in the inhibition of host immune repsonse by counteracting the action of interferons on early events in the viral replication cycle. The protein is Ankyrin repeat protein OPG025 (OPG025) of Vaccinia virus (strain Copenhagen) (VACV).